A 1345-amino-acid chain; its full sequence is DNA-directed RNA polymerase subunit beta' (1345 aa).

The Zn(2+) site is built by Cys60, Cys62, Cys75, and Cys78. Mg(2+) contacts are provided by Asp536, Asp538, and Asp540. Zn(2+) contacts are provided by Cys895, Cys974, Cys981, and Cys984. Positions 1325-1345 are disordered; sequence DDNDNPVDFGDEFRIDPDELK. Residues 1335–1345 are compositionally biased toward basic and acidic residues; it reads DEFRIDPDELK.

The protein belongs to the RNA polymerase beta' chain family. As to quaternary structure, the RNAP catalytic core consists of 2 alpha, 1 beta, 1 beta' and 1 omega subunit. When a sigma factor is associated with the core the holoenzyme is formed, which can initiate transcription. It depends on Mg(2+) as a cofactor. Requires Zn(2+) as cofactor.

It catalyses the reaction RNA(n) + a ribonucleoside 5'-triphosphate = RNA(n+1) + diphosphate. DNA-dependent RNA polymerase catalyzes the transcription of DNA into RNA using the four ribonucleoside triphosphates as substrates. This is DNA-directed RNA polymerase subunit beta' from Bifidobacterium animalis subsp. lactis (strain AD011).